Reading from the N-terminus, the 294-residue chain is Nucleotide-binding protein CLK_2809 (294 aa).

8–15 (GLSGAGKT) lines the ATP pocket. 59–62 (DIRG) contacts GTP.

This sequence belongs to the RapZ-like family.

Displays ATPase and GTPase activities. This is Nucleotide-binding protein CLK_2809 from Clostridium botulinum (strain Loch Maree / Type A3).